The following is a 246-amino-acid chain: uncharacterized protein (246 aa).

3 disordered regions span residues 29–54, 93–114, and 148–246; these read SLET…ENGS, LRRT…EDKF, and PIPP…SVVI. Low complexity predominate over residues 35–49; that stretch reads PTSSSPSLSSNSDVS. Residues 172 to 183 show a composition bias toward polar residues; sequence RQQTNNIRTLHV. 2 stretches are compositionally biased toward low complexity: residues 190–203 and 214–225; these read SSSS…PSSS and SKTTKNRSSNSS. Residue Asn219 is glycosylated (N-linked (GlcNAc...) asparagine). The span at 235-246 shows a compositional bias: polar residues; it reads LTPSPTFESVVI.

This is an uncharacterized protein from Caenorhabditis elegans.